The sequence spans 177 residues: 2''-aminoglycoside nucleotidyltransferase (177 aa).

The N-terminal domain stretch occupies residues 1–92; that stretch reads MDTTQVTLIH…ELLDCEPAWW (92 aa). Residues Asp44, Asp46, and Asp86 each contribute to the Mg(2+) site. Asp86 functions as the Proton acceptor in the catalytic mechanism. The interval 93 to 177 is C-terminal domain; it reads ADEAYEIAEA…RAAFRSRYAA (85 aa). Ala100 provides a ligand contact to kanamycin A.

As to quaternary structure, monomer. It depends on Mg(2+) as a cofactor.

It catalyses the reaction nucleoside triphosphate + gentamicin = diphosphate + 2''-nucleotidylgentamicin.. Mediates bacterial resistance to kanamycin, gentamicin, dibekacin, sisomicin and tobramycin by adenylating the 2''-hydroxyl group of these antibiotics. This is 2''-aminoglycoside nucleotidyltransferase from Klebsiella pneumoniae.